The sequence spans 143 residues: MDIQTILEKTLPGLGYELVDFELTAQGTLRVFIDKEGGITVEDCATVSNHLSRVFMVEDIDYKNLEISSPGLDRPLKKAADFVRFAGQNAKIKTRLPIDGQKNFIGKIEGCENDTVTISFDGKTVQIGLDNIDKARLRPEFKF.

It belongs to the RimP family.

The protein localises to the cytoplasm. Functionally, required for maturation of 30S ribosomal subunits. The polypeptide is Ribosome maturation factor RimP (Neisseria meningitidis serogroup C (strain 053442)).